The primary structure comprises 245 residues: Ribonuclease PH (245 aa).

Phosphate-binding positions include Arg93 and 131 to 133; that span reads GTR.

This sequence belongs to the RNase PH family. As to quaternary structure, homohexameric ring arranged as a trimer of dimers.

It carries out the reaction tRNA(n+1) + phosphate = tRNA(n) + a ribonucleoside 5'-diphosphate. In terms of biological role, phosphorolytic 3'-5' exoribonuclease that plays an important role in tRNA 3'-end maturation. Removes nucleotide residues following the 3'-CCA terminus of tRNAs; can also add nucleotides to the ends of RNA molecules by using nucleoside diphosphates as substrates, but this may not be physiologically important. Probably plays a role in initiation of 16S rRNA degradation (leading to ribosome degradation) during starvation. The protein is Ribonuclease PH of Corynebacterium efficiens (strain DSM 44549 / YS-314 / AJ 12310 / JCM 11189 / NBRC 100395).